The chain runs to 279 residues: NAD kinase (279 aa).

Asp-57 functions as the Proton acceptor in the catalytic mechanism. NAD(+) contacts are provided by residues 57-58, 133-134, Arg-159, Asp-161, and 172-177; these read DG, NE, and TAYNKS.

Belongs to the NAD kinase family. The cofactor is a divalent metal cation.

The protein resides in the cytoplasm. The enzyme catalyses NAD(+) + ATP = ADP + NADP(+) + H(+). In terms of biological role, involved in the regulation of the intracellular balance of NAD and NADP, and is a key enzyme in the biosynthesis of NADP. Catalyzes specifically the phosphorylation on 2'-hydroxyl of the adenosine moiety of NAD to yield NADP. This Streptococcus pyogenes serotype M28 (strain MGAS6180) protein is NAD kinase.